The primary structure comprises 153 residues: Penitrem biosynthesis cluster 1 protein I (153 aa).

Its pathway is secondary metabolite biosynthesis. Part of the gene cluster that mediates the biosynthesis of the indole diterpenes penitrems. The geranylgeranyl diphosphate (GGPP) synthase ptmG catalyzes the first step in penitrem biosynthesis via conversion of farnesyl pyrophosphate and isopentyl pyrophosphate into geranylgeranyl pyrophosphate (GGPP). Condensation of indole-3-glycerol phosphate with GGPP by the prenyl transferase ptmC then forms 3-geranylgeranylindole (3-GGI). Epoxidation by the FAD-dependent monooxygenase ptmM leads to a epoxidized-GGI that is substrate of the terpene cyclase ptmB for cyclization to yield paspaline. Paspaline is subsequently converted to 13-desoxypaxilline by the cytochrome P450 monooxygenase ptmP, the latter being then converted to paxilline by the cytochrome P450 monooxygenase ptmQ. Paxilline is converted to beta-paxitriol via C-10 ketoreduction by the short-chain dehydrogenase ptmH which can be monoprenylated at the C-20 by the indole diterpene prenyltransferase ptmD. A two-step elimination (acetylation and elimination) process performed by the O-acetyltransferase ptmV and ptmI leads to the production of the prenylated form of penijanthine. The FAD-linked oxidoreductase ptmO then converts the prenylated form of penijanthine into PC-M5 which is in turn transformed into PC-M4 by the aromatic dimethylallyltransferase ptmE. Five sequential oxidative transformations performed by the cytochrome P450 monooxygenases ptmK, ptmU, ptmL, ptmN and ptmJ yield the various penitrem compounds. PtmK, ptmU and ptmM are involved in the formation of the key bicyclic ring of penitrem C via the formation of the intermediates secopenitrem D and penitrem D. PtmL catalyzes the epoxidation of penitrem D and C to yield penitrem B and F, respectively. PtmJ catalyzes the last benzylic hydroxylation to convert penitrem B to prenitrem E and penitrem F to penitrem A. This Penicillium ochrochloron protein is Penitrem biosynthesis cluster 1 protein I.